The chain runs to 289 residues: Diaminopimelate epimerase (289 aa).

Residues asparagine 13, glutamine 47, and asparagine 67 each contribute to the substrate site. The Proton donor role is filled by cysteine 76. Substrate-binding positions include 77–78 (GN), asparagine 167, asparagine 200, and 218–219 (ER). Residue cysteine 227 is the Proton acceptor of the active site. 228 to 229 (GT) lines the substrate pocket.

This sequence belongs to the diaminopimelate epimerase family. As to quaternary structure, homodimer.

The protein resides in the cytoplasm. The catalysed reaction is (2S,6S)-2,6-diaminopimelate = meso-2,6-diaminopimelate. It functions in the pathway amino-acid biosynthesis; L-lysine biosynthesis via DAP pathway; DL-2,6-diaminopimelate from LL-2,6-diaminopimelate: step 1/1. Functionally, catalyzes the stereoinversion of LL-2,6-diaminopimelate (L,L-DAP) to meso-diaminopimelate (meso-DAP), a precursor of L-lysine and an essential component of the bacterial peptidoglycan. This Burkholderia thailandensis (strain ATCC 700388 / DSM 13276 / CCUG 48851 / CIP 106301 / E264) protein is Diaminopimelate epimerase.